The following is a 184-amino-acid chain: MTQENQNPPPEQEDVAADPQVNEAAASEPAAVKTPEQEIADLNQQIGELQDNFLRAKAEGENIRRRAVEDIAKAHKFAIESFAEHLVPVTDSLYAALSTDAGDAKAFKEGLEITLKQLLSAFEKGRMTEINPAVGDKFDPHHHQAIASVPSEQDPNTVVSVLQRGYTVADRVLRPALVTVSAPK.

Positions 1 to 35 (MTQENQNPPPEQEDVAADPQVNEAAASEPAAVKTP) are disordered.

This sequence belongs to the GrpE family. As to quaternary structure, homodimer.

It is found in the cytoplasm. Functionally, participates actively in the response to hyperosmotic and heat shock by preventing the aggregation of stress-denatured proteins, in association with DnaK and GrpE. It is the nucleotide exchange factor for DnaK and may function as a thermosensor. Unfolded proteins bind initially to DnaJ; upon interaction with the DnaJ-bound protein, DnaK hydrolyzes its bound ATP, resulting in the formation of a stable complex. GrpE releases ADP from DnaK; ATP binding to DnaK triggers the release of the substrate protein, thus completing the reaction cycle. Several rounds of ATP-dependent interactions between DnaJ, DnaK and GrpE are required for fully efficient folding. This is Protein GrpE from Polynucleobacter asymbioticus (strain DSM 18221 / CIP 109841 / QLW-P1DMWA-1) (Polynucleobacter necessarius subsp. asymbioticus).